Consider the following 219-residue polypeptide: Orotate phosphoribosyltransferase (219 aa).

5-phospho-alpha-D-ribose 1-diphosphate is bound at residue Lys26. Phe34 to Phe35 contacts orotate. Residues Tyr72 to Lys73, Arg98, Lys99, Lys102, His104, and Asp124 to Ala132 contribute to the 5-phospho-alpha-D-ribose 1-diphosphate site. Residues Thr128 and Arg156 each coordinate orotate.

This sequence belongs to the purine/pyrimidine phosphoribosyltransferase family. PyrE subfamily. As to quaternary structure, homodimer. Mg(2+) is required as a cofactor.

It carries out the reaction orotidine 5'-phosphate + diphosphate = orotate + 5-phospho-alpha-D-ribose 1-diphosphate. It participates in pyrimidine metabolism; UMP biosynthesis via de novo pathway; UMP from orotate: step 1/2. Its function is as follows. Catalyzes the transfer of a ribosyl phosphate group from 5-phosphoribose 1-diphosphate to orotate, leading to the formation of orotidine monophosphate (OMP). This is Orotate phosphoribosyltransferase from Xylella fastidiosa (strain 9a5c).